Here is an 83-residue protein sequence, read N- to C-terminus: Small ribosomal subunit protein eS21 (83 aa).

This sequence belongs to the eukaryotic ribosomal protein eS21 family. In terms of assembly, component of the 40S small ribosomal subunit. Interacts with sta.

The protein localises to the cytoplasm. The protein resides in the cytosol. It localises to the rough endoplasmic reticulum. Functionally, may be an associated component of the ribosome rather than a core structural subunit. May act as a translation initiation factor. Has a role in regulation of cell proliferation in the hematopoietic organs and the imaginal disks of larva. The protein is Small ribosomal subunit protein eS21 (RpS21) of Drosophila ananassae (Fruit fly).